A 29-amino-acid polypeptide reads, in one-letter code: CENTISGCSRADCLLTHRKQGCQKTCGLC.

The ShKT domain occupies 1–29 (CENTISGCSRADCLLTHRKQGCQKTCGLC). 3 cysteine pairs are disulfide-bonded: Cys1–Cys29, Cys8–Cys22, and Cys13–Cys26.

This sequence belongs to the sea anemone type 1 potassium channel toxin family. Type 1a subfamily.

It localises to the secreted. It is found in the nematocyst. In terms of biological role, this peptide is similar to the potassium channel toxin ShK, but does not show activity on potassium channels. It appears that Lys-19, which is expected to occupy the pore of the channel, is not sufficiently accessible for binding, and therefore that this peptide must have a distinct functional role that does not involve potassium channels. It is noteworthy that this peptide is much more stable in the presence of trypsin, chymotrypsin and pepsin than the toxin ShK. The protein is ShK homolog Ask132958 of Anemonia sulcata (Mediterranean snakelocks sea anemone).